A 93-amino-acid chain; its full sequence is Large ribosomal subunit protein uL23cz/uL23cy (93 aa).

The protein belongs to the universal ribosomal protein uL23 family. Part of the 50S ribosomal subunit.

Its subcellular location is the plastid. It localises to the chloroplast. In terms of biological role, binds to 23S rRNA. In Arabidopsis thaliana (Mouse-ear cress), this protein is Large ribosomal subunit protein uL23cz/uL23cy (rpl23-A).